A 669-amino-acid polypeptide reads, in one-letter code: 5-taurinomethyluridine-[tRNA] synthase subunit MTO1, mitochondrial (669 aa).

A mitochondrion-targeting transit peptide spans 1 to 25; the sequence is MFLLRGRGHWAAASLGRRLPLRRLR. Residues 42–47, Val154, Ser217, and Gln406 contribute to the FAD site; that span reads GGGHAG. Lys507 bears the N6-methyllysine mark.

Belongs to the MnmG family. In terms of assembly, homodimer; forms a dimer in the presence of potassium. Interacts with GTPBP3; forms the GTPBP3-MTO1 complex composed of homodimers of GTPBP3 and MTO1. FAD is required as a cofactor. In terms of tissue distribution, ubiquitously expressed in various tissues, but with markedly elevated expression in tissues of high metabolic rates.

The protein localises to the mitochondrion. It carries out the reaction 5,10-methylenetetrahydrofolate + uridine(34) in tRNA + taurine + GTP + A + H2O = 5-taurinomethyluridine(34) in tRNA + 7,8-dihydrofolate + GDP + AH2 + phosphate + H(+). Its function is as follows. Component of the GTPBP3-MTO1 complex that catalyzes the 5-taurinomethyluridine (taum(5)U) modification at the 34th wobble position (U34) of mitochondrial tRNAs (mt-tRNAs), which plays a role in mt-tRNA decoding and mitochondrial translation. Taum(5)U formation on mammalian mt-tRNA requires the presence of both GTPBP3-mediated GTPase activity and MTO1 catalytic activity. This Mus musculus (Mouse) protein is 5-taurinomethyluridine-[tRNA] synthase subunit MTO1, mitochondrial.